The sequence spans 517 residues: Probable bifunctional methylthioribulose-1-phosphate dehydratase/enolase-phosphatase E1 (517 aa).

The methylthioribulose-1-phosphate dehydratase stretch occupies residues 1 to 242 (MACGGCSCEA…CIKLYQLGID (242 aa)). Cys-114 contacts substrate. His-132 and His-134 together coordinate Zn(2+). The active-site Proton donor/acceptor; for methylthioribulose-1-phosphate dehydratase activity is Glu-157. His-207 contacts Zn(2+). The interval 278–517 (VVLDIEGTTT…FRTIKSFSEI (240 aa)) is enolase-phosphatase E1. 2 residues coordinate Mg(2+): Asp-281 and Glu-283. Substrate is bound by residues 416–417 (SS) and Lys-450. Position 476 (Asp-476) interacts with Mg(2+).

In the N-terminal section; belongs to the aldolase class II family. MtnB subfamily. The protein in the C-terminal section; belongs to the HAD-like hydrolase superfamily. MasA/MtnC family. Zn(2+) serves as cofactor. The cofactor is Mg(2+).

The catalysed reaction is 5-(methylsulfanyl)-D-ribulose 1-phosphate = 5-methylsulfanyl-2,3-dioxopentyl phosphate + H2O. It carries out the reaction 5-methylsulfanyl-2,3-dioxopentyl phosphate + H2O = 1,2-dihydroxy-5-(methylsulfanyl)pent-1-en-3-one + phosphate. It functions in the pathway amino-acid biosynthesis; L-methionine biosynthesis via salvage pathway; L-methionine from S-methyl-5-thio-alpha-D-ribose 1-phosphate: step 2/6. The protein operates within amino-acid biosynthesis; L-methionine biosynthesis via salvage pathway; L-methionine from S-methyl-5-thio-alpha-D-ribose 1-phosphate: step 3/6. Its pathway is amino-acid biosynthesis; L-methionine biosynthesis via salvage pathway; L-methionine from S-methyl-5-thio-alpha-D-ribose 1-phosphate: step 4/6. This Sorghum bicolor (Sorghum) protein is Probable bifunctional methylthioribulose-1-phosphate dehydratase/enolase-phosphatase E1.